The following is a 172-amino-acid chain: Large ribosomal subunit protein bL17m (172 aa).

Residues 1–8 (MRLSFAAA) constitute a mitochondrion transit peptide.

This sequence belongs to the bacterial ribosomal protein bL17 family. As to quaternary structure, component of the mitochondrial ribosome large subunit (39S) which comprises a 16S rRNA and about 50 distinct proteins.

It is found in the mitochondrion. This Bos taurus (Bovine) protein is Large ribosomal subunit protein bL17m (MRPL17).